Here is a 288-residue protein sequence, read N- to C-terminus: Glucose-1-phosphate thymidylyltransferase (288 aa).

Residue Gly-8 participates in dTDP-alpha-D-glucose binding. DTTP-binding residues include Gly-8, Gly-11, Thr-12, Arg-13, Lys-23, Gln-24, Gln-80, Gly-85, and Asp-108. The dTDP-alpha-D-glucose site is built by Lys-23, Gln-24, Gln-80, Gly-85, Asp-108, Asn-109, Gly-143, Glu-158, Lys-159, Val-169, and Asp-222. Asp-108 lines the Mg(2+) pocket. Asp-222 serves as a coordination point for Mg(2+).

Belongs to the glucose-1-phosphate thymidylyltransferase family. Requires Mg(2+) as cofactor.

The catalysed reaction is dTTP + alpha-D-glucose 1-phosphate + H(+) = dTDP-alpha-D-glucose + diphosphate. The protein operates within carbohydrate biosynthesis; dTDP-L-rhamnose biosynthesis. Catalyzes the conversion of glucose-1-phosphate and dTTP to dTDP-glucose and pyrophosphate. Involved in the biosynthesis of the dTDP-L-rhamnose which is a component of the critical linker, D-N-acetylglucosamine-L-rhamnose disaccharide, which connects the galactan region of arabinogalactan to peptidoglycan via a phosphodiester linkage. This chain is Glucose-1-phosphate thymidylyltransferase (rmlA), found in Mycobacterium tuberculosis (strain CDC 1551 / Oshkosh).